The sequence spans 264 residues: uncharacterized protein (264 aa).

A helical membrane pass occupies residues 182-198 (TVTGVSNALGFIIAALL).

This sequence to E.coli YjiC.

Its subcellular location is the membrane. This is an uncharacterized protein from Escherichia coli (strain K12).